Reading from the N-terminus, the 370-residue chain is 3-dehydroquinate synthase (370 aa).

NAD(+) is bound by residues 112 to 116 (GVVGD), 136 to 137 (TS), lysine 149, lysine 158, and 176 to 179 (TLRT). Zn(2+)-binding residues include glutamate 191, histidine 254, and histidine 276.

The protein belongs to the sugar phosphate cyclases superfamily. Dehydroquinate synthase family. NAD(+) serves as cofactor. Requires Co(2+) as cofactor. It depends on Zn(2+) as a cofactor.

It is found in the cytoplasm. The catalysed reaction is 7-phospho-2-dehydro-3-deoxy-D-arabino-heptonate = 3-dehydroquinate + phosphate. The protein operates within metabolic intermediate biosynthesis; chorismate biosynthesis; chorismate from D-erythrose 4-phosphate and phosphoenolpyruvate: step 2/7. In terms of biological role, catalyzes the conversion of 3-deoxy-D-arabino-heptulosonate 7-phosphate (DAHP) to dehydroquinate (DHQ). In Xanthomonas axonopodis pv. citri (strain 306), this protein is 3-dehydroquinate synthase.